A 339-amino-acid chain; its full sequence is Uroporphyrinogen decarboxylase (339 aa).

Residues 21 to 25 (RQAGR), Asp71, Tyr147, Ser202, and His315 contribute to the substrate site.

Belongs to the uroporphyrinogen decarboxylase family. As to quaternary structure, homodimer.

Its subcellular location is the cytoplasm. The catalysed reaction is uroporphyrinogen III + 4 H(+) = coproporphyrinogen III + 4 CO2. The protein operates within porphyrin-containing compound metabolism; protoporphyrin-IX biosynthesis; coproporphyrinogen-III from 5-aminolevulinate: step 4/4. In terms of biological role, catalyzes the decarboxylation of four acetate groups of uroporphyrinogen-III to yield coproporphyrinogen-III. The protein is Uroporphyrinogen decarboxylase of Helicobacter pylori (strain G27).